A 141-amino-acid polypeptide reads, in one-letter code: Large ribosomal subunit protein bL17 (141 aa).

Belongs to the bacterial ribosomal protein bL17 family. As to quaternary structure, part of the 50S ribosomal subunit. Contacts protein L32.

The chain is Large ribosomal subunit protein bL17 from Rhizobium meliloti (strain 1021) (Ensifer meliloti).